Here is a 297-residue protein sequence, read N- to C-terminus: Golgi-associated RAB2 interactor protein 1A (297 aa).

The disordered stretch occupies residues 226 to 257 (SNRHQTSRDRHTDTATETDNSGNCKSTPLVAS). The segment covering 240–257 (ATETDNSGNCKSTPLVAS) has biased composition (polar residues).

This sequence belongs to the GARIN family. In terms of assembly, interacts (via N-terminus) with RAB2B (in GTP-bound form). As to expression, expressed in testis (at protein level).

The protein localises to the golgi apparatus. RAB2B effector protein required for accurate acrosome formation and normal male fertility. The polypeptide is Golgi-associated RAB2 interactor protein 1A (Mus musculus (Mouse)).